Here is a 61-residue protein sequence, read N- to C-terminus: Large ribosomal subunit protein bL32 (61 aa).

The disordered stretch occupies residues 1–44 (MAVQQNRKSRSRRDMRRSHDALTENALTVDQTTGETHRRHHVTK). The span at 7-16 (RKSRSRRDMR) shows a compositional bias: basic residues. Residues 25 to 34 (NALTVDQTTG) are compositionally biased toward polar residues.

Belongs to the bacterial ribosomal protein bL32 family.

This Acinetobacter baylyi (strain ATCC 33305 / BD413 / ADP1) protein is Large ribosomal subunit protein bL32.